The sequence spans 78 residues: RNA-binding protein KhpA (78 aa).

Residues 29–78 enclose the KH domain; it reads TIIYELTVAKGDIGKIIGKEGRTIKAIRTLLVSVASRDNVKVSLEIMEER.

It belongs to the KhpA RNA-binding protein family.

The protein localises to the cytoplasm. Functionally, a probable RNA-binding protein. The chain is RNA-binding protein KhpA from Chlamydia muridarum (strain MoPn / Nigg).